Here is a 152-residue protein sequence, read N- to C-terminus: Transcriptional repressor NrdR (152 aa).

The segment at 3-34 (CPYCSYNESKVVDSRSTEDSISIRRRRECLEC) is a zinc-finger region. An ATP-cone domain is found at 49 to 139 (ILVIKKNLNR…VYRQFKDINT (91 aa)).

It belongs to the NrdR family. It depends on Zn(2+) as a cofactor.

Its function is as follows. Negatively regulates transcription of bacterial ribonucleotide reductase nrd genes and operons by binding to NrdR-boxes. This is Transcriptional repressor NrdR from Clostridium tetani (strain Massachusetts / E88).